The following is a 477-amino-acid chain: Pentatricopeptide repeat-containing protein At5g47360 (477 aa).

PPR repeat units lie at residues 129–163 (NVKT…NVCA), 164–198 (DTVA…GLYP), 199–233 (DVIT…DCVL), 234–264 (NSVT…MEKE), 273–307 (NAVT…GCMP), 308–343 (NRVT…GGVS), 344–378 (LSEC…GVRP), 379–413 (DGLA…DVKS), and 416–450 (DSDI…KMRL).

This sequence belongs to the PPR family. P subfamily.

This is Pentatricopeptide repeat-containing protein At5g47360 from Arabidopsis thaliana (Mouse-ear cress).